A 52-amino-acid chain; its full sequence is Lantibiotic gallidermin (52 aa).

Positions 1–30 are excised as a propeptide; sequence MEAVKEKNELFDLDVKVNAKESNDSGAEPR. A cross-link (lanthionine (Ser-Cys)) is located at residues 33–37; the sequence is SKFLC. The beta-methyllanthionine (Thr-Cys) cross-link spans 38–41; it reads TPGC. Threonine 44 carries the post-translational modification (Z)-2,3-didehydrobutyrine. The segment at residues 46 to 51 is a cross-link (lanthionine (Ser-Cys)); the sequence is SFNSYC. A cross-link (S-(2-aminovinyl)-D-cysteine (Ser-Cys)) is located at residues 49 to 52; it reads SYCC.

It belongs to the type A lantibiotic family. In terms of processing, maturation of lantibiotics involves the enzymatic conversion of Thr, and Ser into dehydrated AA and the formation of thioether bonds with cysteine. The C-terminal lanthionine undergoes decarboxylation. This is followed by membrane translocation and cleavage of the modified precursor. Post-translationally, the structure of the 2,3-didehydrobutyrine is not discussed in PubMed:1932575. However, in Fig. 5 the NMR model appears to have the Z-isomer.

Its function is as follows. Lanthionine-containing peptide antibiotic (lantibiotic) active on Gram-positive bacteria. The bactericidal activity of lantibiotics is based on depolarization of energized bacterial cytoplasmic membranes, initiated by the formation of aqueous transmembrane pores. This chain is Lantibiotic gallidermin (gdmA), found in Staphylococcus gallinarum.